The chain runs to 187 residues: Meiotically up-regulated protein C1442.13c (187 aa).

2 disordered regions span residues 15 to 46 (QWEN…LSNE) and 119 to 145 (IQEG…PAIN). The segment covering 26–41 (PPRKPKIVQPKKKPSK) has biased composition (basic residues). Residues 145 to 187 (NNGKGKQLLEMMGWSRGKGLGSENQGMVDPVVAVVKNNKQGLH) form the G-patch domain.

It localises to the nucleus. The protein localises to the cytoplasm. Its subcellular location is the cytoskeleton. The protein resides in the microtubule organizing center. It is found in the spindle pole body. Has a role in meiosis and sporulation. Required for meiotic chromosome segregation. The sequence is that of Meiotically up-regulated protein C1442.13c from Schizosaccharomyces pombe (strain 972 / ATCC 24843) (Fission yeast).